A 422-amino-acid chain; its full sequence is SPbeta prophage-derived glycosyltransferase SunS (422 aa).

Belongs to the glycosyltransferase 2 family.

Transfers a hexose moiety onto 'Cys-41' of bacteriocin sublancin-168 (SunA). Accepts UDP-glucose (UDP-Glc), UDP-N-acetylglucosamine (UDP-GlcNAc), UDP-galactose (UDP-Gal), UDP-xylose (UDP-Xyl) and GDP-mannose as substrate. In Bacillus subtilis (strain 168), this protein is SPbeta prophage-derived glycosyltransferase SunS (sunS).